The following is a 317-amino-acid chain: MVKITIMGASGTIGKTVAFNLAEKDVIDEIIMFSRPASHERVKGEILDMYDALAAEDIDCELKASSDYADLAGSSIVLITSGVPRKEGMSRLDLAVPNSKIVQEYSKQIAIHAPDSVILIVTNPVDVMTSIALKTSGFDKKRVIGLGNHLDSLRLKTLLSKHFHINSREIHTRVIGEHGDHMVPLLSSTTIGGILLKSFVEYMDLDVPKLVETLKNSGNNIISKKGATEYGPSYAISNLILTIANDTRKILTVSTYLEGEVEGVYDVSLGVPVILCKHGIKRIVPLKMNDEERTEFFDAARTVKKTTYELEKMLNKE.

8 to 14 (GASGTIG) lines the NADP(+) pocket. The substrate site is built by R85 and R91. NADP(+) contacts are provided by residues N98 and 121–123 (VTN). Positions 123 and 154 each coordinate substrate. H178 (proton acceptor) is an active-site residue.

Belongs to the LDH/MDH superfamily.

It catalyses the reaction (S)-malate + NADP(+) = oxaloacetate + NADPH + H(+). It carries out the reaction (S)-malate + NAD(+) = oxaloacetate + NADH + H(+). In terms of biological role, catalyzes the reversible oxidation of malate to oxaloacetate. The sequence is that of Malate dehydrogenase (mdh) from Methanosphaera stadtmanae (strain ATCC 43021 / DSM 3091 / JCM 11832 / MCB-3).